Here is a 225-residue protein sequence, read N- to C-terminus: Ribonuclease HII (225 aa).

An RNase H type-2 domain is found at glycine 35–aspartate 225. Aspartate 41, glutamate 42, and aspartate 137 together coordinate a divalent metal cation.

The protein belongs to the RNase HII family. Mn(2+) is required as a cofactor. Requires Mg(2+) as cofactor.

The protein resides in the cytoplasm. It carries out the reaction Endonucleolytic cleavage to 5'-phosphomonoester.. Functionally, endonuclease that specifically degrades the RNA of RNA-DNA hybrids. This chain is Ribonuclease HII, found in Nostoc sp. (strain PCC 7120 / SAG 25.82 / UTEX 2576).